The sequence spans 511 residues: 2-isopropylmalate synthase (511 aa).

The Pyruvate carboxyltransferase domain maps to 4–266 (IDIFDTTLRD…ETGIQLQEIK (263 aa)). Mn(2+)-binding residues include Asp-13, His-201, His-203, and Asn-237. The regulatory domain stretch occupies residues 392–511 (ELKMVQVQYG…IKESLRAHPV (120 aa)).

The protein belongs to the alpha-IPM synthase/homocitrate synthase family. LeuA type 1 subfamily. In terms of assembly, homodimer. Mn(2+) is required as a cofactor.

The protein resides in the cytoplasm. It catalyses the reaction 3-methyl-2-oxobutanoate + acetyl-CoA + H2O = (2S)-2-isopropylmalate + CoA + H(+). It functions in the pathway amino-acid biosynthesis; L-leucine biosynthesis; L-leucine from 3-methyl-2-oxobutanoate: step 1/4. In terms of biological role, catalyzes the condensation of the acetyl group of acetyl-CoA with 3-methyl-2-oxobutanoate (2-ketoisovalerate) to form 3-carboxy-3-hydroxy-4-methylpentanoate (2-isopropylmalate). This chain is 2-isopropylmalate synthase, found in Lysinibacillus sphaericus (strain C3-41).